The primary structure comprises 598 residues: Arginine--tRNA ligase (598 aa).

The 'HIGH' region signature appears at 140 to 150 (ANPTGPLHVGH).

This sequence belongs to the class-I aminoacyl-tRNA synthetase family. In terms of assembly, monomer.

It localises to the cytoplasm. The enzyme catalyses tRNA(Arg) + L-arginine + ATP = L-arginyl-tRNA(Arg) + AMP + diphosphate. This is Arginine--tRNA ligase from Synechococcus sp. (strain JA-3-3Ab) (Cyanobacteria bacterium Yellowstone A-Prime).